Here is a 462-residue protein sequence, read N- to C-terminus: Protoheme IX farnesyltransferase, mitochondrial (462 aa).

The next 7 membrane-spanning stretches (helical) occupy residues 152–172, 173–193, 237–257, 269–289, 296–316, 348–368, and 411–431; these read LTILVTLSSICSYAISPYTVS, LPELLFLTMGTALCSGAANAI, MLFLGVNPTVSFLGFLNIVLY, IINTWVGAIVGAIPPLMGWAA, PGAWCLAGLLYAWQFPHFNAL, SLLMFPLCFGLSYFGITDWVF, and AKKLFWGSVWHLPAVLILAML.

This sequence belongs to the UbiA prenyltransferase family.

The protein localises to the mitochondrion membrane. Functionally, converts protoheme IX and farnesyl diphosphate to heme O. The chain is Protoheme IX farnesyltransferase, mitochondrial (COX10) from Debaryomyces hansenii (strain ATCC 36239 / CBS 767 / BCRC 21394 / JCM 1990 / NBRC 0083 / IGC 2968) (Yeast).